We begin with the raw amino-acid sequence, 244 residues long: Transmembrane protein 176A (244 aa).

S42 bears the Phosphoserine mark. The next 4 membrane-spanning stretches (helical) occupy residues 60–80, 92–112, 122–142, and 204–224; these read VLVA…VLGG, SEGA…VAFL, ALMR…AIVI, and LLGI…VYIW.

The protein belongs to the TMEM176 family. As to quaternary structure, interacts with MCOLN2. As to expression, specifically expressed in lung, kidney and spleen.

It is found in the membrane. This is Transmembrane protein 176A (Tmem176a) from Mus musculus (Mouse).